The primary structure comprises 228 residues: 5'-methylthioadenosine/S-adenosylhomocysteine nucleosidase (228 aa).

Glutamate 11 serves as the catalytic Proton acceptor. Substrate is bound by residues glycine 77, isoleucine 151, and 172–173 (ME). Aspartate 196 serves as the catalytic Proton donor.

It belongs to the PNP/UDP phosphorylase family. MtnN subfamily.

It catalyses the reaction S-adenosyl-L-homocysteine + H2O = S-(5-deoxy-D-ribos-5-yl)-L-homocysteine + adenine. The enzyme catalyses S-methyl-5'-thioadenosine + H2O = 5-(methylsulfanyl)-D-ribose + adenine. It carries out the reaction 5'-deoxyadenosine + H2O = 5-deoxy-D-ribose + adenine. Its pathway is amino-acid biosynthesis; L-methionine biosynthesis via salvage pathway; S-methyl-5-thio-alpha-D-ribose 1-phosphate from S-methyl-5'-thioadenosine (hydrolase route): step 1/2. In terms of biological role, catalyzes the irreversible cleavage of the glycosidic bond in both 5'-methylthioadenosine (MTA) and S-adenosylhomocysteine (SAH/AdoHcy) to adenine and the corresponding thioribose, 5'-methylthioribose and S-ribosylhomocysteine, respectively. Also cleaves 5'-deoxyadenosine, a toxic by-product of radical S-adenosylmethionine (SAM) enzymes, into 5-deoxyribose and adenine. The protein is 5'-methylthioadenosine/S-adenosylhomocysteine nucleosidase of Staphylococcus saprophyticus subsp. saprophyticus (strain ATCC 15305 / DSM 20229 / NCIMB 8711 / NCTC 7292 / S-41).